Here is a 177-residue protein sequence, read N- to C-terminus: Chorismate pyruvate-lyase (177 aa).

Positions 36, 78, 116, and 157 each coordinate substrate.

This sequence belongs to the UbiC family. In terms of assembly, monomer.

Its subcellular location is the cytoplasm. The catalysed reaction is chorismate = 4-hydroxybenzoate + pyruvate. It participates in cofactor biosynthesis; ubiquinone biosynthesis. Functionally, removes the pyruvyl group from chorismate, with concomitant aromatization of the ring, to provide 4-hydroxybenzoate (4HB) for the ubiquinone pathway. This Pectobacterium carotovorum subsp. carotovorum (strain PC1) protein is Chorismate pyruvate-lyase.